The chain runs to 357 residues: Phosphoribosylformylglycinamidine cyclo-ligase (357 aa).

The protein belongs to the AIR synthase family.

The protein localises to the cytoplasm. It catalyses the reaction 2-formamido-N(1)-(5-O-phospho-beta-D-ribosyl)acetamidine + ATP = 5-amino-1-(5-phospho-beta-D-ribosyl)imidazole + ADP + phosphate + H(+). It participates in purine metabolism; IMP biosynthesis via de novo pathway; 5-amino-1-(5-phospho-D-ribosyl)imidazole from N(2)-formyl-N(1)-(5-phospho-D-ribosyl)glycinamide: step 2/2. The chain is Phosphoribosylformylglycinamidine cyclo-ligase from Rhizobium etli (strain ATCC 51251 / DSM 11541 / JCM 21823 / NBRC 15573 / CFN 42).